Reading from the N-terminus, the 875-residue chain is Probable ATP-dependent RNA helicase DDX10 (875 aa).

The segment at 1–44 (MGKTVASLGQGTRPDPVRSFNRWKKKHSHRQHQKKERRKQLKKP) is disordered. Threonine 4 carries the phosphothreonine modification. Serine 7 bears the Phosphoserine mark. A compositionally biased stretch (basic residues) spans 21-41 (NRWKKKHSHRQHQKKERRKQL). The Q motif motif lies at 69–97 (TRFSDFPLSKKTLKGLQEAQYRLVTEIQK). ATP contacts are provided by residues 89–91 (YRL), glutamine 96, and 113–120 (AKTGSGKT). Residues 100-274 (IGLALQGKDV…RLSLKDPEYV (175 aa)) enclose the Helicase ATP-binding domain. The DEAD box signature appears at 222-225 (DEAD). In terms of domain architecture, Helicase C-terminal spans 300–449 (KISVLFSFLR…EIKINPEKLI (150 aa)). The disordered stretch occupies residues 525–612 (LVKNPVTEAV…HTESVVSIEE (88 aa)). Serine 540 carries the post-translational modification Phosphoserine. Position 556 is an N6-acetyllysine (lysine 556). Positions 562–575 (KSGERLEETEHRLA) are enriched in basic and acidic residues. Over residues 578–593 (DGDEEQDEETEDEETE) the composition is skewed to acidic residues. Position 587 is a phosphothreonine (threonine 587). The segment covering 594–604 (DHLGKAREPHT) has biased composition (basic and acidic residues). Lysine 652 participates in a covalent cross-link: Glycyl lysine isopeptide (Lys-Gly) (interchain with G-Cter in SUMO2). Residues 734–744 (EEDKFDKEEYR) show a composition bias toward basic and acidic residues. Residues 734–860 (EEDKFDKEEY…VEPLDTGLSL (127 aa)) are disordered. The segment covering 745 to 754 (KKIKAKHRER) has biased composition (basic residues). Residues 755 to 774 (RLKEREARREANKRQAKARD) show a composition bias toward basic and acidic residues. Over residues 775–789 (EEEAFLDWSDEDDGG) the composition is skewed to acidic residues. At serine 783 the chain carries Phosphoserine. Residues 797–831 (DPDKHRSSEESESEDTNHKMSDTKKKQETRKRNNT) show a composition bias toward basic and acidic residues.

It belongs to the DEAD box helicase family. DDX10/DBP4 subfamily. As to quaternary structure, interacts with AIM2; this interaction promotes AIM2 stability. Interacts with SCNA; this interaction causes DDX10 mislocalization to the nucleoplasm and cytoplasmic inclusions.

The protein resides in the cytoplasm. It is found in the nucleus. Its subcellular location is the nucleolus. It carries out the reaction ATP + H2O = ADP + phosphate + H(+). Functionally, putative ATP-dependent RNA helicase that plays various role in innate immunity or inflammation. Plays a role in the enhancement of AIM2-induced inflammasome activation by interacting with AIM2 and stabilizing its protein level. Negatively regulates viral infection by promoting interferon beta production and interferon stimulated genes/ISGs expression. This Mus musculus (Mouse) protein is Probable ATP-dependent RNA helicase DDX10 (Ddx10).